The primary structure comprises 162 residues: Caveolin-2 (162 aa).

Residues 1–86 (MGLETEKADV…FEISKYVMYK (86 aa)) lie on the Cytoplasmic side of the membrane. Phosphotyrosine; by SRC is present on tyrosine 19. Serine 20 and serine 23 each carry phosphoserine. Tyrosine 27 bears the Phosphotyrosine; by SRC mark. Residue serine 36 is modified to Phosphoserine. Positions 87–107 (FLTVFLSIPLAFLAGILFATL) form an intramembrane region, helical. The Cytoplasmic segment spans residues 108 to 162 (SCLHIWIIMPFVKTCLMVLPSVQTIWKSVTDAIIAPLCTSIGRSFSSVSLQLSHD).

This sequence belongs to the caveolin family. Monomer or homodimer. Interacts with CAV1; the interaction forms a stable heterooligomeric complex that is required for targeting to lipid rafts and for caveolae formation. Tyrosine phosphorylated forms do not form heterooligomers with the Tyr-19-phosphorylated form existing as a monomer or dimer, and the Tyr-27-form as a monomer only. Interacts (tyrosine phosphorylated form) with the SH2 domain-containing proteins, RASA1, NCK1 and SRC. Interacts (tyrosine phosphorylated form) with INSR, the interaction (Tyr-27-phosphorylated form) is increased on insulin stimulation. Interacts (Tyr-19 phosphorylated form) with MAPK1 (phosphorylated form); the interaction, promoted by insulin, leads to nuclear location and MAPK1 activation. Interacts with STAT3; the interaction is increased on insulin-induced tyrosine phosphorylation leading to STAT activation. Post-translationally, phosphorylated on serine and tyrosine residues. CAV1 promotes phosphorylation on Ser-23 which then targets the complex to the plasma membrane, lipid rafts and caveolae. Phosphorylation on Ser-36 appears to modulate mitosis in endothelial cells. Phosphorylation on both Tyr-19 and Tyr-27 is required for insulin-induced 'Ser-727' phosphorylation of STAT3 and its activation. Phosphorylation on Tyr-19 is required for insulin-induced phosphorylation of MAPK1 and DNA binding of STAT3. Tyrosine phosphorylation is induced by both EGF and insulin (By. similarity).

It localises to the nucleus. It is found in the cytoplasm. The protein resides in the golgi apparatus membrane. Its subcellular location is the cell membrane. The protein localises to the membrane. It localises to the caveola. Functionally, may act as a scaffolding protein within caveolar membranes. Interacts directly with G-protein alpha subunits and can functionally regulate their activity. Acts as an accessory protein in conjunction with CAV1 in targeting to lipid rafts and driving caveolae formation. The Ser-36 phosphorylated form has a role in modulating mitosis in endothelial cells. Positive regulator of cellular mitogenesis of the MAPK signaling pathway. Required for the insulin-stimulated nuclear translocation and activation of MAPK1 and STAT3, and the subsequent regulation of cell cycle progression. In Saimiri boliviensis boliviensis (Bolivian squirrel monkey), this protein is Caveolin-2 (CAV2).